The following is a 6359-amino-acid chain: Bacitracin synthase 3 (6359 aa).

The tract at residues 461-1034 (LHELFEEQAM…IKGLGEYIRS (574 aa)) is domain 1 (isoleucine-activating). Positions 941-953 (VDRKALPEPDRTA) are enriched in basic and acidic residues. The disordered stretch occupies residues 941-962 (VDRKALPEPDRTAGAENEYEAP). 5 Carrier domains span residues 961–1036 (APRN…RSTK), 1993–2067 (APRN…KKQS), 3497–3572 (APRN…ESMK), 4539–4613 (PPRN…KAES), and 6047–6122 (PPRH…KHAQ). An O-(pantetheine 4'-phosphoryl)serine mark is found at Ser-996, Ser-2028, and Ser-3532. The domain 2 (D-phenylalanine-activating) stretch occupies residues 1517–2064 (FEDQTLTYRQ…RIKDLAKYVK (548 aa)). Positions 2999–3570 (NKTIHQLFEE…IKDIGDFIES (572 aa)) are domain 3 (histidine-activating). A domain 4 (D-aspartic acid-activating) region spans residues 4047-4612 (EQTAVVYADE…KSLSRYVKAE (566 aa)). Positions 4521-4544 (IDTAALPEPQPGKETEYEPPRNET) are disordered. The span at 4531–4544 (PGKETEYEPPRNET) shows a compositional bias: basic and acidic residues. 2 positions are modified to O-(pantetheine 4'-phosphoryl)serine: Ser-4574 and Ser-6082. The domain 5 (asparagine-activating) stretch occupies residues 5549–6129 (IHRLFEEQAE…HAQDLLKDYT (581 aa)).

It belongs to the ATP-dependent AMP-binding enzyme family. Large multienzyme complex of BA1, BA2 and BA3. Pantetheine 4'-phosphate is required as a cofactor.

The enzyme catalyses L-aspartate = D-aspartate. It carries out the reaction L-phenylalanine + ATP + H2O = D-phenylalanine + AMP + diphosphate + H(+). It participates in antibiotic biosynthesis; bacitracin biosynthesis. Functionally, induces peptide synthesis, activates and incorporates five amino acids, forms a thiazoline ring between the first two amino acids and incorporates a D-glutamine in the fourth position. The chain is Bacitracin synthase 3 (bacC) from Bacillus licheniformis.